The primary structure comprises 25 residues: Antithrombin-III (25 aa).

This sequence belongs to the serpin family. In terms of assembly, forms protease inhibiting heterodimer with TMPRSS7. Phosphorylated by FAM20C in the extracellular medium. As to expression, plasma.

The protein resides in the secreted. It localises to the extracellular space. Functionally, most important serine protease inhibitor in plasma that regulates the blood coagulation cascade. AT-III inhibits thrombin, matriptase-3/TMPRSS7, as well as factors IXa, Xa and XIa. Its inhibitory activity is greatly enhanced in the presence of heparin. The chain is Antithrombin-III (SERPINC1) from Mesocricetus auratus (Golden hamster).